The chain runs to 358 residues: Ribosomal RNA large subunit methyltransferase M (358 aa).

Residues Ser191, 224 to 227 (APGG), Asp243, Asp263, and Asp279 each bind S-adenosyl-L-methionine. The active-site Proton acceptor is the Lys308.

Belongs to the class I-like SAM-binding methyltransferase superfamily. RNA methyltransferase RlmE family. RlmM subfamily. In terms of assembly, monomer.

Its subcellular location is the cytoplasm. The enzyme catalyses cytidine(2498) in 23S rRNA + S-adenosyl-L-methionine = 2'-O-methylcytidine(2498) in 23S rRNA + S-adenosyl-L-homocysteine + H(+). Functionally, catalyzes the 2'-O-methylation at nucleotide C2498 in 23S rRNA. The polypeptide is Ribosomal RNA large subunit methyltransferase M (Marinobacter nauticus (strain ATCC 700491 / DSM 11845 / VT8) (Marinobacter aquaeolei)).